Consider the following 92-residue polypeptide: Small ribosomal subunit protein uS19c (92 aa).

The protein belongs to the universal ribosomal protein uS19 family.

It localises to the plastid. Its subcellular location is the chloroplast. Its function is as follows. Protein S19 forms a complex with S13 that binds strongly to the 16S ribosomal RNA. The polypeptide is Small ribosomal subunit protein uS19c (Psilotum nudum (Whisk fern)).